A 469-amino-acid chain; its full sequence is 3-isopropylmalate dehydratase large subunit (469 aa).

The [4Fe-4S] cluster site is built by cysteine 349, cysteine 410, and cysteine 413.

This sequence belongs to the aconitase/IPM isomerase family. LeuC type 1 subfamily. As to quaternary structure, heterodimer of LeuC and LeuD. [4Fe-4S] cluster is required as a cofactor.

It carries out the reaction (2R,3S)-3-isopropylmalate = (2S)-2-isopropylmalate. The protein operates within amino-acid biosynthesis; L-leucine biosynthesis; L-leucine from 3-methyl-2-oxobutanoate: step 2/4. Catalyzes the isomerization between 2-isopropylmalate and 3-isopropylmalate, via the formation of 2-isopropylmaleate. The polypeptide is 3-isopropylmalate dehydratase large subunit (Aromatoleum aromaticum (strain DSM 19018 / LMG 30748 / EbN1) (Azoarcus sp. (strain EbN1))).